The sequence spans 224 residues: Urease accessory protein UreF (224 aa).

It belongs to the UreF family. As to quaternary structure, ureD, UreF and UreG form a complex that acts as a GTP-hydrolysis-dependent molecular chaperone, activating the urease apoprotein by helping to assemble the nickel containing metallocenter of UreC. The UreE protein probably delivers the nickel.

The protein resides in the cytoplasm. Required for maturation of urease via the functional incorporation of the urease nickel metallocenter. The sequence is that of Urease accessory protein UreF from Pseudomonas putida (strain ATCC 700007 / DSM 6899 / JCM 31910 / BCRC 17059 / LMG 24140 / F1).